The chain runs to 656 residues: Probable serine/threonine-protein kinase sky1 (656 aa).

The tract at residues 1-127 (MSDIQQDSTS…KQGGYHPVRR (127 aa)) is disordered. The segment covering 16-48 (TSLGGTSLGGTSLGGTSLGGTSLGGTSLGGTSL) has biased composition (gly residues). Composition is skewed to low complexity over residues 49 to 64 (GGST…STNS) and 72 to 89 (TSSN…NNNE). Positions 96–108 (AGSSNKSFMPLNN) are enriched in polar residues. Residues 135–648 (YQVVDKLGWG…AKDCLNHTWL (514 aa)) form the Protein kinase domain. 141–149 (LGWGHFSTV) is an ATP binding site. Positions 157-185 (TPITTSSSSSSTTTTTTSSSSNGNGNGNG) are disordered. Residues 160 to 179 (TTSSSSSSTTTTTTSSSSNG) are compositionally biased toward low complexity. ATP is bound at residue K197. The active-site Proton acceptor is the D298. Positions 330-454 (RTSSSNKQSQ…TTATATATTT (125 aa)) are disordered. Low complexity predominate over residues 332–355 (SSSNKQSQQQQQPQQQQSQQNIND). 2 stretches are compositionally biased toward basic and acidic residues: residues 383 to 401 (SNRD…DDNK) and 413 to 440 (ENTD…KEEP). Over residues 441-454 (TTTTTTATATATTT) the composition is skewed to low complexity.

The protein belongs to the protein kinase superfamily. CMGC Ser/Thr protein kinase family.

It carries out the reaction L-seryl-[protein] + ATP = O-phospho-L-seryl-[protein] + ADP + H(+). The catalysed reaction is L-threonyl-[protein] + ATP = O-phospho-L-threonyl-[protein] + ADP + H(+). The chain is Probable serine/threonine-protein kinase sky1 (sky1) from Dictyostelium discoideum (Social amoeba).